The sequence spans 492 residues: N-succinylglutamate 5-semialdehyde dehydrogenase (492 aa).

An NAD(+)-binding site is contributed by 220-225 (GSASTG). Catalysis depends on residues E243 and C277.

Belongs to the aldehyde dehydrogenase family. AstD subfamily.

The enzyme catalyses N-succinyl-L-glutamate 5-semialdehyde + NAD(+) + H2O = N-succinyl-L-glutamate + NADH + 2 H(+). It functions in the pathway amino-acid degradation; L-arginine degradation via AST pathway; L-glutamate and succinate from L-arginine: step 4/5. Functionally, catalyzes the NAD-dependent reduction of succinylglutamate semialdehyde into succinylglutamate. This chain is N-succinylglutamate 5-semialdehyde dehydrogenase, found in Salmonella gallinarum (strain 287/91 / NCTC 13346).